We begin with the raw amino-acid sequence, 138 residues long: Acidic phospholipase A2 Drk-a1 (138 aa).

A signal peptide spans 1-16; sequence MRTLWIVAVCLIGVEG. Disulfide bonds link cysteine 42-cysteine 131, cysteine 44-cysteine 60, cysteine 59-cysteine 111, cysteine 65-cysteine 138, cysteine 66-cysteine 104, cysteine 73-cysteine 97, and cysteine 91-cysteine 102. Residues tyrosine 43, glycine 45, and glycine 47 each contribute to the Ca(2+) site. Histidine 63 is an active-site residue. Aspartate 64 serves as a coordination point for Ca(2+). The active site involves aspartate 105.

The protein belongs to the phospholipase A2 family. Group II subfamily. D49 sub-subfamily. Requires Ca(2+) as cofactor. In terms of tissue distribution, expressed by the venom gland.

It localises to the secreted. It catalyses the reaction a 1,2-diacyl-sn-glycero-3-phosphocholine + H2O = a 1-acyl-sn-glycero-3-phosphocholine + a fatty acid + H(+). In terms of biological role, snake venom phospholipase A2 (PLA2) that exhibits high hydrolytic activities and shows strong preference for the anionic micelles (dPPC with deoxycholate) to the zwitterionic micelles (dPPC with Triton X-100). PLA2 catalyzes the calcium-dependent hydrolysis of the 2-acyl groups in 3-sn-phosphoglycerides. This chain is Acidic phospholipase A2 Drk-a1, found in Daboia russelii (Russel's viper).